Consider the following 339-residue polypeptide: Glycerol-3-phosphate dehydrogenase [NAD(P)+] (339 aa).

Ser15, Tyr16, His36, and Lys110 together coordinate NADPH. Sn-glycerol 3-phosphate contacts are provided by Lys110, Gly139, and Thr141. Ala143 contacts NADPH. The sn-glycerol 3-phosphate site is built by Lys195, Asp248, Ser258, Arg259, and Asn260. The Proton acceptor role is filled by Lys195. Arg259 is a binding site for NADPH. Positions 283 and 285 each coordinate NADPH.

Belongs to the NAD-dependent glycerol-3-phosphate dehydrogenase family.

It is found in the cytoplasm. It carries out the reaction sn-glycerol 3-phosphate + NAD(+) = dihydroxyacetone phosphate + NADH + H(+). The catalysed reaction is sn-glycerol 3-phosphate + NADP(+) = dihydroxyacetone phosphate + NADPH + H(+). The protein operates within membrane lipid metabolism; glycerophospholipid metabolism. Catalyzes the reduction of the glycolytic intermediate dihydroxyacetone phosphate (DHAP) to sn-glycerol 3-phosphate (G3P), the key precursor for phospholipid synthesis. This chain is Glycerol-3-phosphate dehydrogenase [NAD(P)+], found in Erwinia tasmaniensis (strain DSM 17950 / CFBP 7177 / CIP 109463 / NCPPB 4357 / Et1/99).